The sequence spans 386 residues: GTPase Obg (386 aa).

Residues 1–159 (MKFVDEAVIR…RSLKLELMLL (159 aa)) form the Obg domain. The OBG-type G domain maps to 160-333 (ADVGLLGMPN…LSLKLVDFID (174 aa)). GTP is bound by residues 166 to 173 (GMPNAGKS), 191 to 195 (FTTLV), 213 to 216 (DIPG), 283 to 286 (NKKD), and 314 to 316 (SAY). Positions 173 and 193 each coordinate Mg(2+). The interval 356-375 (KDSDSLNEDFDDSDDDDFDD) is disordered. Residues 360 to 375 (SLNEDFDDSDDDDFDD) are compositionally biased toward acidic residues.

This sequence belongs to the TRAFAC class OBG-HflX-like GTPase superfamily. OBG GTPase family. As to quaternary structure, monomer. It depends on Mg(2+) as a cofactor.

The protein resides in the cytoplasm. In terms of biological role, an essential GTPase which binds GTP, GDP and possibly (p)ppGpp with moderate affinity, with high nucleotide exchange rates and a fairly low GTP hydrolysis rate. Plays a role in control of the cell cycle, stress response, ribosome biogenesis and in those bacteria that undergo differentiation, in morphogenesis control. This chain is GTPase Obg, found in Shewanella sediminis (strain HAW-EB3).